A 957-amino-acid chain; its full sequence is Protein translocase subunit SecA (957 aa).

ATP is bound by residues Q87, 105–109, and D512; that span reads GEGKT. The interval 924–957 is disordered; that stretch reads AAPAQAPSKSKRSAGRNDPCPCGSGQKYKKCCGK. Residues C943, C945, C954, and C955 each coordinate Zn(2+).

It belongs to the SecA family. In terms of assembly, monomer and homodimer. Part of the essential Sec protein translocation apparatus which comprises SecA, SecYEG and auxiliary proteins SecDF-YajC and YidC. Zn(2+) serves as cofactor.

It is found in the cell inner membrane. The protein localises to the cytoplasm. It catalyses the reaction ATP + H2O + cellular proteinSide 1 = ADP + phosphate + cellular proteinSide 2.. In terms of biological role, part of the Sec protein translocase complex. Interacts with the SecYEG preprotein conducting channel. Has a central role in coupling the hydrolysis of ATP to the transfer of proteins into and across the cell membrane, serving as an ATP-driven molecular motor driving the stepwise translocation of polypeptide chains across the membrane. This Geobacter sp. (strain M21) protein is Protein translocase subunit SecA.